We begin with the raw amino-acid sequence, 316 residues long: 4-hydroxy-3-methylbut-2-enyl diphosphate reductase (316 aa).

Cys-12 serves as a coordination point for [4Fe-4S] cluster. 2 residues coordinate (2E)-4-hydroxy-3-methylbut-2-enyl diphosphate: His-41 and His-74. Dimethylallyl diphosphate contacts are provided by His-41 and His-74. Isopentenyl diphosphate is bound by residues His-41 and His-74. [4Fe-4S] cluster is bound at residue Cys-96. His-124 is a binding site for (2E)-4-hydroxy-3-methylbut-2-enyl diphosphate. Position 124 (His-124) interacts with dimethylallyl diphosphate. His-124 lines the isopentenyl diphosphate pocket. Glu-126 acts as the Proton donor in catalysis. (2E)-4-hydroxy-3-methylbut-2-enyl diphosphate is bound at residue Thr-167. Cys-197 contacts [4Fe-4S] cluster. (2E)-4-hydroxy-3-methylbut-2-enyl diphosphate is bound by residues Ser-225, Ser-226, Asn-227, and Ser-269. Residues Ser-225, Ser-226, Asn-227, and Ser-269 each coordinate dimethylallyl diphosphate. The isopentenyl diphosphate site is built by Ser-225, Ser-226, Asn-227, and Ser-269.

This sequence belongs to the IspH family. Homodimer. It depends on [4Fe-4S] cluster as a cofactor.

The enzyme catalyses isopentenyl diphosphate + 2 oxidized [2Fe-2S]-[ferredoxin] + H2O = (2E)-4-hydroxy-3-methylbut-2-enyl diphosphate + 2 reduced [2Fe-2S]-[ferredoxin] + 2 H(+). The catalysed reaction is dimethylallyl diphosphate + 2 oxidized [2Fe-2S]-[ferredoxin] + H2O = (2E)-4-hydroxy-3-methylbut-2-enyl diphosphate + 2 reduced [2Fe-2S]-[ferredoxin] + 2 H(+). The protein operates within isoprenoid biosynthesis; dimethylallyl diphosphate biosynthesis; dimethylallyl diphosphate from (2E)-4-hydroxy-3-methylbutenyl diphosphate: step 1/1. Its pathway is isoprenoid biosynthesis; isopentenyl diphosphate biosynthesis via DXP pathway; isopentenyl diphosphate from 1-deoxy-D-xylulose 5-phosphate: step 6/6. Catalyzes the conversion of 1-hydroxy-2-methyl-2-(E)-butenyl 4-diphosphate (HMBPP) into a mixture of isopentenyl diphosphate (IPP) and dimethylallyl diphosphate (DMAPP). Acts in the terminal step of the DOXP/MEP pathway for isoprenoid precursor biosynthesis. This Cronobacter sakazakii (strain ATCC BAA-894) (Enterobacter sakazakii) protein is 4-hydroxy-3-methylbut-2-enyl diphosphate reductase.